We begin with the raw amino-acid sequence, 255 residues long: uncharacterized protein (255 aa).

Residues 1–23 (MKRLNKLVLGIIFLFLVISITAG) form the signal peptide. Cys-24 carries N-palmitoyl cysteine lipidation. Cys-24 carries the S-diacylglycerol cysteine lipid modification.

It belongs to the staphylococcal tandem lipoprotein family.

It is found in the cell membrane. This is an uncharacterized protein from Staphylococcus aureus (strain Mu50 / ATCC 700699).